Consider the following 300-residue polypeptide: Acetylglutamate kinase (300 aa).

Residues Gly73–Gly74, Arg95, and Asn197 contribute to the substrate site.

It belongs to the acetylglutamate kinase family. ArgB subfamily.

It is found in the cytoplasm. It catalyses the reaction N-acetyl-L-glutamate + ATP = N-acetyl-L-glutamyl 5-phosphate + ADP. It functions in the pathway amino-acid biosynthesis; L-arginine biosynthesis; N(2)-acetyl-L-ornithine from L-glutamate: step 2/4. Catalyzes the ATP-dependent phosphorylation of N-acetyl-L-glutamate. The polypeptide is Acetylglutamate kinase (Bordetella parapertussis (strain 12822 / ATCC BAA-587 / NCTC 13253)).